The chain runs to 201 residues: MBF complex negative regulatory component yox1 (201 aa).

The segment covering 1–22 (MSLSDSPSKSGNTGKDLISNNE) has biased composition (polar residues). A disordered region spans residues 1 to 42 (MSLSDSPSKSGNTGKDLISNNEAKNHEDEETHQKKRRRRTTD). Residues 23–32 (AKNHEDEETH) show a composition bias toward basic and acidic residues. The segment at residues 33–92 (QKKRRRRTTDAEATLLEQYFLKTPKPSLIERQELSKKLKSSMTPRELQIWFQNKRQSLRR) is a DNA-binding region (homeobox).

In terms of assembly, component of the MBF transcription factor complex. In terms of processing, phosphorylated in response to hydroxyurea. Phosphorylation inhibits the repressor activity and is dependent on rad3. However, the regulation of yox1 by rad3 is probably indirect.

It is found in the nucleus. Negative regulatory component of the MBF transcription factor complex involved in cell-cycle G1/S phase-specific gene expression and more particularly DNA replication checkpoint-dependent gene expression. This is MBF complex negative regulatory component yox1 (yox1) from Schizosaccharomyces pombe (strain 972 / ATCC 24843) (Fission yeast).